The following is a 447-amino-acid chain: Ribosomal protein uS12 methylthiotransferase RimO (447 aa).

An MTTase N-terminal domain is found at P4 to P114. Positions 13, 49, 78, 147, 151, and 154 each coordinate [4Fe-4S] cluster. The 238-residue stretch at L133 to A370 folds into the Radical SAM core domain. One can recognise a TRAM domain in the interval Q373–K443.

This sequence belongs to the methylthiotransferase family. RimO subfamily. Requires [4Fe-4S] cluster as cofactor.

The protein resides in the cytoplasm. It catalyses the reaction L-aspartate(89)-[ribosomal protein uS12]-hydrogen + (sulfur carrier)-SH + AH2 + 2 S-adenosyl-L-methionine = 3-methylsulfanyl-L-aspartate(89)-[ribosomal protein uS12]-hydrogen + (sulfur carrier)-H + 5'-deoxyadenosine + L-methionine + A + S-adenosyl-L-homocysteine + 2 H(+). In terms of biological role, catalyzes the methylthiolation of an aspartic acid residue of ribosomal protein uS12. In Acinetobacter baumannii (strain SDF), this protein is Ribosomal protein uS12 methylthiotransferase RimO.